A 1374-amino-acid chain; its full sequence is DNA-directed RNA polymerase subunit beta (1374 aa).

It belongs to the RNA polymerase beta chain family. In terms of assembly, the RNAP catalytic core consists of 2 alpha, 1 beta, 1 beta' and 1 omega subunit. When a sigma factor is associated with the core the holoenzyme is formed, which can initiate transcription.

The catalysed reaction is RNA(n) + a ribonucleoside 5'-triphosphate = RNA(n+1) + diphosphate. Functionally, DNA-dependent RNA polymerase catalyzes the transcription of DNA into RNA using the four ribonucleoside triphosphates as substrates. The chain is DNA-directed RNA polymerase subunit beta from Paracidovorax citrulli (strain AAC00-1) (Acidovorax citrulli).